A 155-amino-acid chain; its full sequence is Sec-independent protein translocase protein TatB (155 aa).

A helical membrane pass occupies residues 1–21 (MFGMGFFEILVVLVVAIIFLG). The segment at 109–155 (SLENNAPPKHLNKEVSNREVFHNEPPKEIELIANNNTTKHDKEKEHV) is disordered. Composition is skewed to basic and acidic residues over residues 119–138 (LNKE…KEIE) and 146–155 (TKHDKEKEHV).

Belongs to the TatB family. As to quaternary structure, the Tat system comprises two distinct complexes: a TatABC complex, containing multiple copies of TatA, TatB and TatC subunits, and a separate TatA complex, containing only TatA subunits. Substrates initially bind to the TatABC complex, which probably triggers association of the separate TatA complex to form the active translocon.

It localises to the cell inner membrane. Part of the twin-arginine translocation (Tat) system that transports large folded proteins containing a characteristic twin-arginine motif in their signal peptide across membranes. Together with TatC, TatB is part of a receptor directly interacting with Tat signal peptides. TatB may form an oligomeric binding site that transiently accommodates folded Tat precursor proteins before their translocation. The polypeptide is Sec-independent protein translocase protein TatB (Helicobacter acinonychis (strain Sheeba)).